The chain runs to 855 residues: Sucrose synthase 5 (855 aa).

The interval 279-758 (SIFNIVIFSI…GLQRICECYT (480 aa)) is GT-B glycosyltransferase.

The protein belongs to the glycosyltransferase 1 family. Plant sucrose synthase subfamily. Predominantly expressed in roots, flowers and immature seeds.

Its subcellular location is the cytoplasm. It localises to the membrane. The catalysed reaction is an NDP-alpha-D-glucose + D-fructose = a ribonucleoside 5'-diphosphate + sucrose + H(+). Sucrose-cleaving enzyme that provides UDP-glucose and fructose for various metabolic pathways. This is Sucrose synthase 5 (SUS5) from Oryza sativa subsp. japonica (Rice).